A 461-amino-acid polypeptide reads, in one-letter code: Cysteine--tRNA ligase (461 aa).

Residue Cys-28 coordinates Zn(2+). Residues 30–40 (VTIYDLCHIGH) carry the 'HIGH' region motif. Residues Cys-209, His-234, and Glu-238 each contribute to the Zn(2+) site. Positions 266-270 (KMSKS) match the 'KMSKS' region motif. Lys-269 is a binding site for ATP.

Belongs to the class-I aminoacyl-tRNA synthetase family. In terms of assembly, monomer. The cofactor is Zn(2+).

It localises to the cytoplasm. It catalyses the reaction tRNA(Cys) + L-cysteine + ATP = L-cysteinyl-tRNA(Cys) + AMP + diphosphate. This is Cysteine--tRNA ligase from Serratia proteamaculans (strain 568).